Reading from the N-terminus, the 380-residue chain is SAM and SH3 domain-containing protein 3 (380 aa).

Residues 1-174 (MLRRKPSNAS…STAPQYTGPF (174 aa)) form a disordered region. The segment covering 22–41 (LQRSSSFKDFAKSKPSSPVV) has biased composition (low complexity). Phosphoserine is present on residues serine 27, serine 34, and serine 42. At threonine 61 the chain carries Phosphothreonine. Over residues 84–93 (MNRKTGKKMV) the composition is skewed to basic residues. Position 97 is a phosphoserine (serine 97). Threonine 103 is subject to Phosphothreonine. The residue at position 110 (serine 110) is a Phosphoserine. Phosphothreonine is present on threonine 112. Phosphoserine occurs at positions 113 and 120. Polar residues predominate over residues 143–158 (RQASTGSELCSPSPGS). Positions 173-234 (PFCGRARVHT…KFIYVDVLPE (62 aa)) constitute an SH3 domain. In terms of domain architecture, SAM spans 252–316 (PKPKTLHELL…LTAAELLLDY (65 aa)). Threonine 318 is subject to Phosphothreonine. The span at 318–327 (TGSEEAEEGT) shows a compositional bias: acidic residues. The disordered stretch occupies residues 318-380 (TGSEEAEEGT…LHGLSLSGAP (63 aa)). Serine 320 is modified (phosphoserine).

It belongs to the SASH family.

Its function is as follows. May function as a signaling adapter protein in lymphocytes. In Bos taurus (Bovine), this protein is SAM and SH3 domain-containing protein 3.